We begin with the raw amino-acid sequence, 448 residues long: Beta-glucosidase B (448 aa).

Residue Glu167 is the Proton donor of the active site. Residue Glu356 is the Nucleophile of the active site.

Belongs to the glycosyl hydrolase 1 family.

It carries out the reaction Hydrolysis of terminal, non-reducing beta-D-glucosyl residues with release of beta-D-glucose.. The chain is Beta-glucosidase B (bglB) from Paenibacillus polymyxa (Bacillus polymyxa).